Reading from the N-terminus, the 281-residue chain is Apolipoprotein Eb (281 aa).

Residues 1–18 (MRSLVVFFALAVLTGCQA) form the signal peptide. Positions 19 to 24 (RSLFQA) are excised as a propeptide. Residues 34 to 66 (MVDRFWQYVSELNTQTDGMVQNIKGSQLSRELD) form a 3 X approximate tandem repeats region. 9 consecutive repeat copies span residues 67 to 88 (TLITDTMAELSSYSENLQTQMT), 89 to 110 (PYASDAAGQLSKDLQLLAGKLQ), 111 to 132 (TDMTDAKERSTQYLQELKTMME), 133 to 154 (QNADDVKNRVGTYTRKLKKRLN), 155 to 176 (KDTEEIRNTVATYMSEMQSRAS), 177 to 199 (QNADAVKDRFQPYMSQAQDGATQ), 200 to 227 (KLGAISELMKAQAQEVSEQLEVQAGALK), 228 to 249 (EKLEETAENLRTSLEGRVDELT), and 254 to 281 (PYSQKIREQLQEVMDKIKEATAALPTQA). Residues 67–281 (TLITDTMAEL…EATAALPTQA (215 aa)) form a 9 X 22 AA approximate tandem repeats region.

This sequence belongs to the apolipoprotein A1/A4/E family. Homotetramer.

It localises to the secreted. The protein resides in the extracellular space. The protein localises to the extracellular matrix. Its function is as follows. APOE is an apolipoprotein, a protein associating with lipid particles, that mainly functions in lipoprotein-mediated lipid transport between organs via the plasma and interstitial fluids. APOE is a core component of plasma lipoproteins and is involved in their production, conversion and clearance. Apolipoproteins are amphipathic molecules that interact both with lipids of the lipoprotein particle core and the aqueous environment of the plasma. This is Apolipoprotein Eb (apoeb) from Danio rerio (Zebrafish).